Reading from the N-terminus, the 537-residue chain is Pentatricopeptide repeat-containing protein At4g32450, mitochondrial (537 aa).

The N-terminal 110 residues, 1–110 (MIYTLTRGSL…EHSEIINQRN (110 aa)), are a transit peptide targeting the mitochondrion. Over residues 113–140 (WQSSDGCSSYGTTGNGVPQENNTGGNHF) the composition is skewed to polar residues. The tract at residues 113–148 (WQSSDGCSSYGTTGNGVPQENNTGGNHFQQDHSGHS) is disordered. PPR repeat units lie at residues 145–179 (SGHS…GYVV), 180–210 (DLPR…ITSS), 215–249 (DISA…NLET), 250–280 (WCGV…GNKP), 281–316 (DGEM…GIIP), and 317–347 (CMEH…MEPN). The type E(+) motif stretch occupies residues 412 to 442 (YGIRYMAAGDISRPENRELYMALKSLKEHMI). Positions 443–537 (EIGYVPLSKL…DGVCSCREYW (95 aa)) are type DYW motif.

This sequence belongs to the PPR family. PCMP-H subfamily.

It localises to the mitochondrion. In Arabidopsis thaliana (Mouse-ear cress), this protein is Pentatricopeptide repeat-containing protein At4g32450, mitochondrial (PCMP-H63).